The chain runs to 177 residues: Anditomin synthesis protein L (177 aa).

2 consecutive transmembrane segments (helical) span residues V54 to M74 and I117 to F137. Residue N165 is glycosylated (N-linked (GlcNAc...) asparagine).

The protein resides in the membrane. It participates in secondary metabolite biosynthesis; terpenoid biosynthesis. Part of the gene cluster that mediates the biosynthesis of anditomin, a fungal meroterpenoid. The first step of the pathway is the synthesis of 3,5-dimethylorsellinic acid (DMOA) by the polyketide synthase andM. DMOA is then converted to the phthalide compound 5,7-dihydroxy-4,6-dimethylphthalide (DHDMP) by the cytochrome P450 monooxygenase andK, which is further prenylated by the prenyltransferase andD to yield farnesyl-DHDMP. Further epoxidation by the FAD-dependent monooxygenase andE leads to epoxyfarnesyl-DHDMP. The next step involves the terpene cyclase andB that converts epoxyfarnesyl-DHDMP into preandiloid A through opening of the epoxide ring followed by the cyclization of the farnesyl moiety. Preandiloid A is in turn oxidized at the C-3 hydroxyl group to yield preandiloid B by the dehydrogenase andC. The dioxygenase andA is solely responsible for the dehydrogenation of preandiloid B leading to the enone preandiloid C, as well as for the intriguing structural rearrangement to generate the bicyclo[2.2.2]octane core, transforming preandiloid C into andiconin. FAD-binding monooxygenase andJ then produces andilesin D which is reduced by dehydrogenase andI to yield andilesin A. Action of acetyltransferase andG followed by a spontaneous acetate elimination leads then to andilesin B, which is in turn substrate of the short chain dehydrogenase andH to yield andilesin C. Finally, the dioxygenase andF catalyzes the transformation of andilesin C to anditomin. The exact role of andL within the anditomin biosynthetic pathway has not been identified yet. This Emericella variicolor (Aspergillus stellatus) protein is Anditomin synthesis protein L.